Consider the following 404-residue polypeptide: Chorismate synthase (404 aa).

NADP(+) contacts are provided by R40 and R46. FMN is bound by residues 136 to 138 (RAS), 257 to 258 (QA), G301, 316 to 320 (KPIST), and R342.

Belongs to the chorismate synthase family. Homotetramer. Requires FMNH2 as cofactor.

It carries out the reaction 5-O-(1-carboxyvinyl)-3-phosphoshikimate = chorismate + phosphate. Its pathway is metabolic intermediate biosynthesis; chorismate biosynthesis; chorismate from D-erythrose 4-phosphate and phosphoenolpyruvate: step 7/7. Its function is as follows. Catalyzes the anti-1,4-elimination of the C-3 phosphate and the C-6 proR hydrogen from 5-enolpyruvylshikimate-3-phosphate (EPSP) to yield chorismate, which is the branch point compound that serves as the starting substrate for the three terminal pathways of aromatic amino acid biosynthesis. This reaction introduces a second double bond into the aromatic ring system. The polypeptide is Chorismate synthase (Mycolicibacterium vanbaalenii (strain DSM 7251 / JCM 13017 / BCRC 16820 / KCTC 9966 / NRRL B-24157 / PYR-1) (Mycobacterium vanbaalenii)).